The chain runs to 305 residues: Glycine betaine-binding protein YehZ (305 aa).

Positions 1 to 23 (MPLLKLWAGSLVMLAAVSLPLQA) are cleaved as a signal peptide.

This sequence belongs to the OsmX family. As to quaternary structure, the complex is composed of two ATP-binding proteins (YehX), two transmembrane proteins (YehW and YehY) and a solute-binding protein (YehZ).

The protein resides in the periplasm. Part of an ABC transporter complex involved in low-affinity glycine betaine uptake. Binds glycine betaine with low affinity. The chain is Glycine betaine-binding protein YehZ (yehZ) from Escherichia coli (strain K12).